The following is a 226-amino-acid chain: 7-cyano-7-deazaguanine synthase (226 aa).

9–19 (LSGGLDSATVL) is a binding site for ATP. 4 residues coordinate Zn(2+): Cys189, Cys199, Cys202, and Cys205.

Belongs to the QueC family. Requires Zn(2+) as cofactor.

It carries out the reaction 7-carboxy-7-deazaguanine + NH4(+) + ATP = 7-cyano-7-deazaguanine + ADP + phosphate + H2O + H(+). Its pathway is purine metabolism; 7-cyano-7-deazaguanine biosynthesis. Functionally, catalyzes the ATP-dependent conversion of 7-carboxy-7-deazaguanine (CDG) to 7-cyano-7-deazaguanine (preQ(0)). The chain is 7-cyano-7-deazaguanine synthase from Cupriavidus pinatubonensis (strain JMP 134 / LMG 1197) (Cupriavidus necator (strain JMP 134)).